Consider the following 320-residue polypeptide: Cytochrome f (320 aa).

The N-terminal stretch at 1-35 (MENRKTFSWLKEQMIRSISVSIMIYVITRTSISNA) is a signal peptide. Heme-binding residues include Tyr36, Cys56, Cys59, and His60. The chain crosses the membrane as a helical span at residues 286 to 305 (VQGLLFFFASVILAQVFLVL).

The protein belongs to the cytochrome f family. In terms of assembly, the 4 large subunits of the cytochrome b6-f complex are cytochrome b6, subunit IV (17 kDa polypeptide, petD), cytochrome f and the Rieske protein, while the 4 small subunits are PetG, PetL, PetM and PetN. The complex functions as a dimer. Heme is required as a cofactor.

Its subcellular location is the plastid. The protein localises to the chloroplast thylakoid membrane. Its function is as follows. Component of the cytochrome b6-f complex, which mediates electron transfer between photosystem II (PSII) and photosystem I (PSI), cyclic electron flow around PSI, and state transitions. The chain is Cytochrome f (petA) from Zea mays (Maize).